We begin with the raw amino-acid sequence, 508 residues long: Arabinose import ATP-binding protein AraG (508 aa).

2 consecutive ABC transporter domains span residues 5–240 (LEFQ…MVGR) and 250–496 (ARTL…LPDA). 37–44 (GENGAGKS) is an ATP binding site.

The protein belongs to the ABC transporter superfamily. Arabinose importer (TC 3.A.1.2.2) family. As to quaternary structure, the complex is composed of two ATP-binding proteins (AraG), two transmembrane proteins (AraH) and a solute-binding protein (AraF).

The protein localises to the cell inner membrane. The enzyme catalyses L-arabinose(out) + ATP + H2O = L-arabinose(in) + ADP + phosphate + H(+). Part of the ABC transporter complex AraFGH involved in arabinose import. Responsible for energy coupling to the transport system. This Rhizobium meliloti (strain 1021) (Ensifer meliloti) protein is Arabinose import ATP-binding protein AraG.